We begin with the raw amino-acid sequence, 533 residues long: Putative sel1-like repeat-containing protein L21 (533 aa).

Sel1-like repeat units follow at residues 105-140 (VLSQ…NQGL), 141-172 (SFAQ…QSGY), 173-206 (YLSN…NQGC), 207-242 (NISQ…KQGN), and 243-278 (YFSQ…NCGH).

This chain is Putative sel1-like repeat-containing protein L21, found in Acanthamoeba polyphaga mimivirus (APMV).